The primary structure comprises 21 residues: uncharacterized protein (21 aa).

This is an uncharacterized protein from Dictyostelium discoideum (Social amoeba).